A 261-amino-acid chain; its full sequence is Early E1A protein (261 aa).

The tract at residues 43–51 (PTLHDLYDL) is interaction with RB1 in competition with E2F1. Positions 78 to 149 (EGLDINPPPE…VNEGVKAASD (72 aa)) are interaction with UBE2I. The short motif at 106–110 (PDLGA) is the PXLXP motif, interaction with host ZMYND11 element. Residues 115–119 (LRCYE) carry the LXCXE motif, interaction with host RB1 and TMEM173/STING motif. Residues 163–183 (CKSCEFHRNNTGMKELLCSLC) fold into a zinc finger. Residues 197–261 (SDDESPSPDS…DLSTRKLPRQ (65 aa)) are disordered. Positions 203–212 (SPDSTTSPPE) are enriched in low complexity. The PXDLS motif, CTBP-binding signature appears at 250 to 254 (PLDLS). Positions 256 to 261 (RKLPRQ) match the Nuclear localization signal motif.

This sequence belongs to the adenoviridae E1A protein family. As to quaternary structure, interacts with host UBE2I; this interaction interferes with polySUMOylation. Interacts with host RB1; this interaction induces the aberrant dissociation of RB1-E2F1 complex thereby disrupting the activity of RB1 and activating E2F1-regulated genes. Interacts with host ATF7; the interaction enhances ATF7-mediated viral transactivation activity which requires the zinc binding domains of both proteins. Isoform early E1A 32 kDa protein and isoform early E1A 26 kDa protein interact (via N-terminus) with CUL1 and E3 ubiquitin ligase RBX1; these interactions inhibit RBX1-CUL1-dependent elongation reaction of ubiquitin chains and attenuate ubiquitination of SCF(FBXW7) target proteins. Interacts (via PXLXP motif) with host ZMYND11/BS69 (via MYND-type zinc finger); this interaction inhibits E1A mediated transactivation. Interacts with host EP300; this interaction stimulates the acetylation of RB1 by recruiting EP300 and RB1 into a multimeric-protein complex. Interacts with host CTBP1 and CTBP2; this interaction seems to potentiate viral replication. Interacts with host DCAF7. Interacts with host DYRK1A. Interacts with host KPNA4; this interaction allows E1A import into the host nucleus. Interacts with host EP400; this interaction stabilizes MYC. Interacts with host TBP protein; this interaction probably disrupts the TBP-TATA complex. Interacts (via LXCXE motif) with host TMEM173/STING; this interaction impairs the ability of TMEM173/STING to sense cytosolic DNA and promote the production of type I interferon (IFN-alpha and IFN-beta). Interacts (via C-terminus) with host ZBED1/hDREF (via C-terminus); the interaction is direct.

The protein localises to the host nucleus. Plays a role in viral genome replication by driving entry of quiescent cells into the cell cycle. Stimulation of progression from G1 to S phase allows the virus to efficiently use the cellular DNA replicating machinery to achieve viral genome replication. E1A protein has both transforming and trans-activating activities. Induces the disassembly of the E2F1 transcription factor from RB1 by direct competition for the same binding site on RB1, with subsequent transcriptional activation of E2F1-regulated S-phase genes and of the E2 region of the adenoviral genome. Release of E2F1 leads to the ARF-mediated inhibition of MDM2 and causes TP53/p53 to accumulate because it is not targeted for degradation by MDM2-mediated ubiquitination anymore. This increase in TP53, in turn, would arrest the cell proliferation and direct its death but this effect is counteracted by the viral protein E1B-55K. Inactivation of the ability of RB1 to arrest the cell cycle is critical for cellular transformation, uncontrolled cellular growth and proliferation induced by viral infection. Interaction with RBX1 and CUL1 inhibits ubiquitination of the proteins targeted by SCF(FBXW7) ubiquitin ligase complex, and may be linked to unregulated host cell proliferation. The tumorigenesis-restraining activity of E1A may be related to the disruption of the host CtBP-CtIP complex through the CtBP binding motif. Interaction with host TMEM173/STING impairs the ability of TMEM173/STING to sense cytosolic DNA and promote the production of type I interferon (IFN-alpha and IFN-beta). Promotes the sumoylation of host ZBED1/hDREF with SUMO1. The chain is Early E1A protein from Human adenovirus B serotype 7 (HAdV-7).